Consider the following 95-residue polypeptide: Putative septation protein SpoVG (95 aa).

This sequence belongs to the SpoVG family.

Could be involved in septation. The polypeptide is Putative septation protein SpoVG (Clostridium acetobutylicum (strain ATCC 824 / DSM 792 / JCM 1419 / IAM 19013 / LMG 5710 / NBRC 13948 / NRRL B-527 / VKM B-1787 / 2291 / W)).